The primary structure comprises 401 residues: MVYVAFNKKTIEDIDVKGRKVLVRCDFNVPLKDGKITDENRLMGALPTIKYIMEKGGKVILCSHLGKPKGEPKQELSLAPVAKRLSELLNKEVLFPADNEVVGENAKKAVENMKDGDVILLQNTRYRKEETKNEETFSKELASLADIFVNDAFGTAHRAHCSTVGVTEFVATSVCGYLIQKELKFLGNAVENPQRPFISILGGAKVSDKINVINNLLEKVDTLIIGGGMSYTFQKAQGYTIGSSLLEEDKIDYAKEMIEKAKEKGVKLLLPVDNVAAEKFAEDAEAIITEDQNIKEGYMGLDIGPKTSKLYSQEVQSAKTVVWNGPMGVFEFEKFAKGTIEVAKAMAESQATTIIGGGDSAAAVNQLGFGDKMTHISTGGGASLEFLEGKELPGIAALNDK.

Residues 26-28 (DFN), R41, 64-67 (HLGK), R125, and R158 contribute to the substrate site. Residues K209, G300, E331, and 357 to 360 (GGDS) each bind ATP.

It belongs to the phosphoglycerate kinase family. Monomer.

Its subcellular location is the cytoplasm. It carries out the reaction (2R)-3-phosphoglycerate + ATP = (2R)-3-phospho-glyceroyl phosphate + ADP. It participates in carbohydrate degradation; glycolysis; pyruvate from D-glyceraldehyde 3-phosphate: step 2/5. The chain is Phosphoglycerate kinase from Clostridium tetani (strain Massachusetts / E88).